A 523-amino-acid chain; its full sequence is Probable endopeptidase p60 (523 aa).

An N-terminal signal peptide occupies residues 1-27 (MNMKKATIAATAGIAVTAFAAPTIASA). A LysM 1 domain is found at 28-71 (STVVVEAGDTLWGIAQDNGTTVDALKKANKLTTDKIVPGQKLQV). The region spanning 78–142 (KTEKSVSATW…VNGKYLGNAV (65 aa)) is the SH3b domain. The interval 146–188 (PSATPEVKQEETTQAAPAQQTKTEVKQATPAATTEKDAVETKT) is disordered. The segment covering 157–167 (TTQAAPAQQTK) has biased composition (low complexity). In terms of domain architecture, LysM 2 spans 198–241 (TTHTVKSGDTIWALSVKYGASVQDLMSWNNLSSSSIYVGQNIAV). Low complexity-rich tracts occupy residues 251-282 (PKAE…TTTT) and 290-318 (EKQT…TNAS). Disordered regions lie at residues 251 to 323 (PKAE…YTVK) and 367 to 408 (ATNT…SSSA). The LysM 3 domain occupies 318–361 (SSYTVKSGDTLGKIASTFGTTVSKIKALNGLTSDNLQVGDVLKV). Positions 405-523 (SSSASAIIAE…GQYLVGFGRV (119 aa)) constitute a NlpC/P60 domain. The active-site Nucleophile is cysteine 435. Catalysis depends on histidine 485, which acts as the Proton acceptor. Residue asparagine 497 is part of the active site.

It belongs to the peptidase C40 family.

Its function is as follows. This major extracellular protein may be involved in the invasion of non-professional phagocytic cells by Listeria. The chain is Probable endopeptidase p60 (iap) from Listeria seeligeri.